The chain runs to 64 residues: Large ribosomal subunit protein uL29 (64 aa).

This sequence belongs to the universal ribosomal protein uL29 family.

This chain is Large ribosomal subunit protein uL29, found in Pseudomonas entomophila (strain L48).